Reading from the N-terminus, the 2931-residue chain is Probable polyketide synthase 9/36 (2931 aa).

The region spanning 11 to 442 (EKGVAIVGIG…GSNCCLLISE (432 aa)) is the Ketosynthase family 3 (KS3) domain. Catalysis depends on for beta-ketoacyl synthase activity residues Cys181, His323, and His362. An acyl/malonyl transferase region spans residues 635–668 (GVNPSFILGHSLGEISASYCSGMIDLDTFCYTVY). The For acyl/malonyl transferase activity role is filled by Ser645. Residues 925–1047 (IDHLGTSNSY…ANFQLLDHGN (123 aa)) are N-terminal hotdog fold. A PKS/mFAS DH domain is found at 925-1209 (IDHLGTSNSY…CKSLIPIKDS (285 aa)). The active-site Proton acceptor; for dehydratase activity is the His959. The interval 1064–1209 (NLSKLTKNEL…CKSLIPIKDS (146 aa)) is C-terminal hotdog fold. The active-site Proton donor; for dehydratase activity is the Asp1122. The helical transmembrane segment at 2293 to 2313 (LINFVMASSAISLIGSTDLCT) threads the bilayer. A Carrier domain is found at 2429–2506 (TGNKNIDELF…TSMKMILNSL (78 aa)). Ser2466 carries the post-translational modification O-(pantetheine 4'-phosphoryl)serine. A helical membrane pass occupies residues 2553–2573 (KIILLTGTTGFLGGFLLFNMV).

Pantetheine 4'-phosphate serves as cofactor.

The protein localises to the membrane. Its function is as follows. Probable polyketide synthase. The sequence is that of Probable polyketide synthase 9/36 (pks9) from Dictyostelium discoideum (Social amoeba).